We begin with the raw amino-acid sequence, 349 residues long: Eukaryotic translation initiation factor 3 subunit I (349 aa).

6 WD repeats span residues 8-49 (GHER…GTLE), 51-91 (HIGT…QSWE), 93-135 (PTPV…DYTK), 148-187 (SDAKKVTVAGWSANGDFIIAGHEDGYVSKYNSSTGEFIET), 197-239 (EKIA…KVYK), and 295-336 (GHFG…FEFD).

It belongs to the eIF-3 subunit I family. As to quaternary structure, component of the eukaryotic translation initiation factor 3 (eIF-3) complex.

The protein localises to the cytoplasm. In terms of biological role, component of the eukaryotic translation initiation factor 3 (eIF-3) complex, which is involved in protein synthesis of a specialized repertoire of mRNAs and, together with other initiation factors, stimulates binding of mRNA and methionyl-tRNAi to the 40S ribosome. The eIF-3 complex specifically targets and initiates translation of a subset of mRNAs involved in cell proliferation. This chain is Eukaryotic translation initiation factor 3 subunit I, found in Debaryomyces hansenii (strain ATCC 36239 / CBS 767 / BCRC 21394 / JCM 1990 / NBRC 0083 / IGC 2968) (Yeast).